Consider the following 376-residue polypeptide: N-acetyldiaminopimelate deacetylase (376 aa).

The active site involves D69. Residue E128 is the Proton acceptor of the active site.

It belongs to the peptidase M20A family. N-acetyldiaminopimelate deacetylase subfamily.

It catalyses the reaction N-acetyl-(2S,6S)-2,6-diaminopimelate + H2O = (2S,6S)-2,6-diaminopimelate + acetate. The protein operates within amino-acid biosynthesis; L-lysine biosynthesis via DAP pathway; LL-2,6-diaminopimelate from (S)-tetrahydrodipicolinate (acetylase route): step 3/3. Catalyzes the conversion of N-acetyl-diaminopimelate to diaminopimelate and acetate. The chain is N-acetyldiaminopimelate deacetylase from Streptococcus pneumoniae (strain 70585).